Consider the following 130-residue polypeptide: UPF0102 protein RPE_0358 (130 aa).

This sequence belongs to the UPF0102 family.

The chain is UPF0102 protein RPE_0358 from Rhodopseudomonas palustris (strain BisA53).